The following is a 75-amino-acid chain: Brevinin-2ISc (75 aa).

The first 22 residues, 1 to 22, serve as a signal peptide directing secretion; it reads MFTLKKSLLLLFFLGTISLSLC. Residues 23–40 constitute a propeptide, removed in mature form; sequence EEERDADEDEGEMTEEEV. Residues cysteine 69 and cysteine 75 are joined by a disulfide bond.

Expressed by the skin glands.

The protein resides in the secreted. Has antimicrobial activity against Gram-negative bacterium E.coli ATCC 8739 (MIC=50 ug) and against Gram positive bacteria S.aureus ATCC 6538 (MIC=25 ug). Has no activity against methicillin-resistant S.aureus ATCC 43300, B.subtilis ATCC 6633 and against fungus C.albicans ATCC 90028. This is Brevinin-2ISc from Odorrana ishikawae (Ishikawa's frog).